Here is a 1044-residue protein sequence, read N- to C-terminus: Isoleucine--tRNA ligase (1044 aa).

A 'HIGH' region motif is present at residues 48–58 (PFATGLPHFGH). The short motif at 594-598 (KMSKS) is the 'KMSKS' region element. An ATP-binding site is contributed by K597.

Belongs to the class-I aminoacyl-tRNA synthetase family. IleS type 2 subfamily. In terms of assembly, monomer. Zn(2+) is required as a cofactor.

The protein resides in the cytoplasm. It catalyses the reaction tRNA(Ile) + L-isoleucine + ATP = L-isoleucyl-tRNA(Ile) + AMP + diphosphate. Functionally, catalyzes the attachment of isoleucine to tRNA(Ile). As IleRS can inadvertently accommodate and process structurally similar amino acids such as valine, to avoid such errors it has two additional distinct tRNA(Ile)-dependent editing activities. One activity is designated as 'pretransfer' editing and involves the hydrolysis of activated Val-AMP. The other activity is designated 'posttransfer' editing and involves deacylation of mischarged Val-tRNA(Ile). The polypeptide is Isoleucine--tRNA ligase (Borrelia recurrentis (strain A1)).